A 149-amino-acid polypeptide reads, in one-letter code: Calmodulin-like protein (149 aa).

EF-hand domains follow at residues 6–41 (TTQA…VGSN), 42–76 (PTQQ…KMKY), 78–113 (DSEA…IGEK), and 113–148 (KLTK…SKSF). 5 residues coordinate Ca(2+): Asp19, Asp21, Asp23, Lys25, and Glu30.

Belongs to the calmodulin family.

It localises to the contractile vacuole. In terms of biological role, mediates the control of a large number of enzymes, ion channels and other proteins by Ca(2+) ions. Among the enzymes to be stimulated by the calmodulin-Ca(2+) complex are a number of protein kinases and phosphatases. This chain is Calmodulin-like protein (calB), found in Dictyostelium discoideum (Social amoeba).